The chain runs to 328 residues: DNA-directed RNA polymerase subunit alpha (328 aa).

Positions 1–231 (MIYQMQMPER…EHVSLFANFS (231 aa)) are alpha N-terminal domain (alpha-NTD). Positions 252 to 328 (MRKLLQTRIE…MDITKYQMKS (77 aa)) are alpha C-terminal domain (alpha-CTD).

The protein belongs to the RNA polymerase alpha chain family. In terms of assembly, homodimer. The RNAP catalytic core consists of 2 alpha, 1 beta, 1 beta' and 1 omega subunit. When a sigma factor is associated with the core the holoenzyme is formed, which can initiate transcription.

It catalyses the reaction RNA(n) + a ribonucleoside 5'-triphosphate = RNA(n+1) + diphosphate. DNA-dependent RNA polymerase catalyzes the transcription of DNA into RNA using the four ribonucleoside triphosphates as substrates. In Prosthecochloris aestuarii (strain DSM 271 / SK 413), this protein is DNA-directed RNA polymerase subunit alpha.